Reading from the N-terminus, the 160-residue chain is Major strawberry allergen Fra a 1-B (160 aa).

The protein belongs to the BetVI family. Monomer.

The polypeptide is Major strawberry allergen Fra a 1-B (Fragaria ananassa (Strawberry)).